We begin with the raw amino-acid sequence, 219 residues long: Transmembrane emp24 domain-containing protein 10 (219 aa).

The signal sequence occupies residues 1-31 (MSGSSGPQAQRGPCPFALLLLLLLGPSSVLA). The tract at residues 1–142 (MSGSSGPQAQ…KNYEEIAKVE (142 aa)) is required for interaction with STX17. At 32–185 (ISFHLPVNSR…RDTNESTNTR (154 aa)) the chain is on the lumenal side. The region spanning 41-193 (RKCLREEIHK…TRVLYFSIFS (153 aa)) is the GOLD domain. Residues 147–178 (LEVELRRLEDLSESIVNDFAYMKKREEEMRDT) are required for TMED10 and TMED2 cis-Golgi network localization. 2 positions are modified to dimethylated arginine: Arg171 and Arg176. Residue Asn179 is glycosylated (N-linked (GlcNAc...) asparagine). The helical transmembrane segment at 186–206 (VLYFSIFSMFCLIGLATWQVF) threads the bilayer. The tract at residues 204 to 219 (QVFYLRRFFKAKKLIE) is interaction with COPG1. Residues 207–219 (YLRRFFKAKKLIE) are Cytoplasmic-facing. Positions 207–219 (YLRRFFKAKKLIE) are interaction with ARF1 and IL1B. Positions 211–212 (FF) match the COPII vesicle coat-binding motif. The COPI vesicle coat-binding signature appears at 211 to 219 (FFKAKKLIE).

Belongs to the EMP24/GP25L family. Predominantly dimeric and to a lesser extent monomeric in the ER. Monomer and dimer in ERGIC and cis-Golgi network. Forms homooligomer (via GOLD domain); the assembly is promoted by direct binding with leaderless cargos and may form a protein channel that facilitates cargo entry into the ERGIC. Forms heterooligomeric complexes with other members of the p24 family such as TMED2, TMED7 and TMED9. Interacts (via GOLD domain) with TMED2 (via GOLD domain); the complex is required for export of TMED10 from the ER to the cis-Golgi network; the complex is proposed to be involved in cis-Golgi network dynamics and / or biogenesis. Associates with the COPI vesicle coat subunits (coatomer). Tetramerization of the cytoplasmic domain at the Golgi membrane in vitro; the complex is proposed to interact with COPI coatomer and induce budding of the vesicles. Interacts with COPG1; the interaction involves TMED10 homodimer. Interacts with ARF1 (GDP-bound); the interaction probably involves a TMED10 oligomer. Interacts with SEC23A, SEC24B, SEC24C and SEC24D components of the coat protein complex II/COPII, indicative of an association of TMED10 with the COPII vesicle coat. Interacts with CD59. Interacts with MPPE1/PGAP5; the complex might recruit and sort GPI-anchored proteins to the ER-exit site, or the interaction might lead to recycling of PGAP5 between the ER and the Golgi. Interacts with F2LR1/PAR2. Interacts with KDELR2/ERD2; the interaction is disrupted by KDELR2 ligand. Found in a complex composed at least of SURF4, TMED2 and TMED10. Associates with the presenilin-dependent gamma-secretase complex. Interacts with STX17; the interaction is direct. Interacts with IL-1; the interaction is direct. Interacts with RAB21 (active GTP-bound form); the interaction is indirect and regulates TMED10 abundance and localization at the Golgi.

The protein resides in the endoplasmic reticulum membrane. Its subcellular location is the endoplasmic reticulum-Golgi intermediate compartment membrane. It localises to the golgi apparatus membrane. It is found in the golgi apparatus. The protein localises to the cis-Golgi network membrane. The protein resides in the trans-Golgi network membrane. Its subcellular location is the cytoplasmic vesicle. It localises to the secretory vesicle membrane. It is found in the cell membrane. The protein localises to the melanosome. In terms of biological role, cargo receptor involved in protein vesicular trafficking and quality control in the endoplasmic reticulum (ER) and Golgi. The p24 protein family is a group of transmembrane proteins that bind coat protein complex I/COPI and coat protein complex II/COPII involved in vesicular trafficking between the membranes. Acts at the lumenal side for incorporation of secretory cargo molecules into transport vesicles and involved in vesicle coat formation at the cytoplasmic side. Mainly functions in the early secretory pathway and cycles between the ER, ER-Golgi intermediate compartment (ERGIC) and Golgi, mediating cargo transport through COPI and COPII-coated vesicles. In COPII vesicle-mediated anterograde transport, involved in the transport of GPI-anchored proteins by acting together with TMED2 as their cargo receptor; the function specifically implies SEC24C and SEC24D of the COPII vesicle coat and lipid raft-like microdomains of the ER. Recognizes GPI anchors structural remodeled in the ER by the GPI inositol-deacylase/PGAP1 and the metallophosphoesterase MPPE1/PGAP5. In COPI vesicle-mediated retrograde transport, involved in the biogenesis of COPI vesicles and vesicle coat recruitment. Involved in trafficking of amyloid beta A4 protein and soluble APP-beta release (independent from the modulation of gamma-secretase activity). Involved in the KDELR2-mediated retrograde transport of the toxin A subunit (CTX-A-K63)together with COPI and the COOH terminus of KDELR2. On Golgi membranes, acts as a primary receptor for ARF1-GDP, a GTP-binding protein involved in COPI-vesicle formation. Increases coatomer-dependent GTPase-activating activity of ARFGAP2 which mediates the hydrolysis of ARF1-bound GTP and therefore modulates protein trafficking from the Golgi apparatus. Involved in the exocytic trafficking of G protein-coupled receptors F2LR1/PAR2 (trypsin and tryspin-like enzyme receptor), OPRM1 (opioid receptor) and P2RY4 (UTD and UDP receptor) from the Golgi to the plasma membrane, thus contributing to receptor resensitization. In addition to its cargo receptor activity, may also act as a protein channel after oligomerization, facilitating the post-translational entry of leaderless cytoplasmic cargo into the ERGIC. Involved in the translocation into ERGIC, the vesicle entry and the secretion of leaderless cargos (lacking the secretion signal sequence), including the mature form of interleukin 1/IL-1 family members, the alpha-crystallin B chain HSPB5, the carbohydrate-binding proteins galectin-1/LGALS1 and galectin-3/LGALS3, the microtubule-associated protein Tau/MAPT, and the annexin A1/ANXA1; the translocation process is dependent on cargo protein unfolding and enhanced by chaperones HSP90AB1 and HSP90B1/GRP9. Could also associates with the presenilin-dependent gamma-secretase complex in order to regulate gamma-cleavages of the amyloid beta A4 protein to yield amyloid-beta 40/Abeta40. The polypeptide is Transmembrane emp24 domain-containing protein 10 (TMED10) (Bos taurus (Bovine)).